We begin with the raw amino-acid sequence, 224 residues long: uncharacterized protein (224 aa).

Residues His57, His59, Asp61, His62, His138, Asp162, and His203 each contribute to the Zn(2+) site.

The protein belongs to the metallo-beta-lactamase superfamily. Glyoxalase II family. Requires Zn(2+) as cofactor.

This is an uncharacterized protein from Mycobacterium tuberculosis (strain CDC 1551 / Oshkosh).